The chain runs to 230 residues: N-(5'-phosphoribosyl)anthranilate isomerase (230 aa).

It belongs to the TrpF family.

The enzyme catalyses N-(5-phospho-beta-D-ribosyl)anthranilate = 1-(2-carboxyphenylamino)-1-deoxy-D-ribulose 5-phosphate. It participates in amino-acid biosynthesis; L-tryptophan biosynthesis; L-tryptophan from chorismate: step 3/5. In Thermosynechococcus vestitus (strain NIES-2133 / IAM M-273 / BP-1), this protein is N-(5'-phosphoribosyl)anthranilate isomerase.